A 239-amino-acid chain; its full sequence is Uridylate kinase (239 aa).

13–16 (KLSG) provides a ligand contact to ATP. Gly55 contacts UMP. 2 residues coordinate ATP: Gly56 and Arg60. UMP contacts are provided by residues Asp75 and 136 to 143 (TGNPFFTT). ATP-binding residues include Thr163, Asn164, Tyr169, and Asp172.

Belongs to the UMP kinase family. In terms of assembly, homohexamer.

It localises to the cytoplasm. The catalysed reaction is UMP + ATP = UDP + ADP. The protein operates within pyrimidine metabolism; CTP biosynthesis via de novo pathway; UDP from UMP (UMPK route): step 1/1. Inhibited by UTP. In terms of biological role, catalyzes the reversible phosphorylation of UMP to UDP. The sequence is that of Uridylate kinase from Neisseria gonorrhoeae (strain ATCC 700825 / FA 1090).